Here is a 344-residue protein sequence, read N- to C-terminus: uncharacterized protein (344 aa).

The Cytoplasmic segment spans residues 1–98; that stretch reads MIDFVKSRDT…NNDEIGIWNY (98 aa). The helical transmembrane segment at 99 to 119 threads the bilayer; sequence ISVAEMGGVLLFLSYWIWTCL. Residue histidine 120 is a topological domain, lumenal. Residues 121–141 form a helical membrane-spanning segment; the sequence is FSKIIFPAQKVICLYIFLFAL. Topologically, residues 142 to 198 are cytoplasmic; it reads NQTLQECIEEYVFSSECIKYRQFYSVYEIIDFLRTNFYRLFVIYCALGFGITRTVPK. The chain crosses the membrane as a helical span at residues 199–219; the sequence is YLMIKGISIVIALCSVYWISL. Over 220–222 the chain is Lumenal; the sequence is YKD. A helical transmembrane segment spans residues 223-243; that stretch reads VYVVSEIFDMIQYEVSPAIWV. Residues 244–273 lie on the Cytoplasmic side of the membrane; it reads YSICHLLKQCTSVTTYENASKARFFRRMLN. Residues 274 to 294 form a helical membrane-spanning segment; it reads AFIFIFCASPMLHYLSNIIFG. The Lumenal portion of the chain corresponds to 295–344; the sequence is NFDYRLSVIIGDLFTFMEKIAFPCYIMFPTHNEALAYNRNVAEEAQEKMI.

It belongs to the UPF0742 family.

The protein localises to the endoplasmic reticulum. The protein resides in the membrane. This is an uncharacterized protein from Schizosaccharomyces pombe (strain 972 / ATCC 24843) (Fission yeast).